The primary structure comprises 818 residues: LisH domain-containing protein ARMC9 (818 aa).

The 33-residue stretch at 7 to 39 (HESELLGLVKEYLDFAEFEDTLKTFSKECKIKG) folds into the LisH domain. The stretch at 204 to 230 (QSNKEILQQLHQQLVEAERRSVTYLKR) forms a coiled coil. Residue Ser582 is modified to Phosphoserine. Disordered regions lie at residues 642-755 (VQWS…TTRE) and 790-818 (SSCG…SHRK). The span at 701–711 (STPESCVSSSS) shows a compositional bias: low complexity. Over residues 792–818 (CGPQQASRPGSTASSTRGLPSSQSHRK) the composition is skewed to polar residues.

Interacts with TOGARAM1, CCDC66, CEP104, CSPP1 and CEP290. Interacts with NDUFAF2. Strongly expressed in most melanomas and melanocytes. Weakly expressed in the testis.

It localises to the cytoplasm. Its subcellular location is the cytoskeleton. The protein localises to the cilium basal body. The protein resides in the cell projection. It is found in the cilium. It localises to the microtubule organizing center. Its subcellular location is the centrosome. The protein localises to the centriole. Involved in ciliogenesis. It is required for appropriate acetylation and polyglutamylation of ciliary microtubules, and regulation of cilium length. Acts as a positive regulator of hedgehog (Hh)signaling. May participate in the trafficking and/or retention of GLI2 and GLI3 proteins at the ciliary tip. The chain is LisH domain-containing protein ARMC9 from Homo sapiens (Human).